The chain runs to 128 residues: Large ribosomal subunit protein uL22 (128 aa).

The protein belongs to the universal ribosomal protein uL22 family. In terms of assembly, part of the 50S ribosomal subunit.

In terms of biological role, this protein binds specifically to 23S rRNA; its binding is stimulated by other ribosomal proteins, e.g. L4, L17, and L20. It is important during the early stages of 50S assembly. It makes multiple contacts with different domains of the 23S rRNA in the assembled 50S subunit and ribosome. Its function is as follows. The globular domain of the protein is located near the polypeptide exit tunnel on the outside of the subunit, while an extended beta-hairpin is found that lines the wall of the exit tunnel in the center of the 70S ribosome. This is Large ribosomal subunit protein uL22 from Prochlorococcus marinus subsp. pastoris (strain CCMP1986 / NIES-2087 / MED4).